The chain runs to 607 residues: Elongation factor 4 (607 aa).

In terms of domain architecture, tr-type G spans 11–193; the sequence is SKIRNFSIIA…QIVEKVPAPA (183 aa). GTP-binding positions include 23–28 and 140–143; these read DHGKST and NKID.

It belongs to the TRAFAC class translation factor GTPase superfamily. Classic translation factor GTPase family. LepA subfamily.

Its subcellular location is the cell membrane. The enzyme catalyses GTP + H2O = GDP + phosphate + H(+). Functionally, required for accurate and efficient protein synthesis under certain stress conditions. May act as a fidelity factor of the translation reaction, by catalyzing a one-codon backward translocation of tRNAs on improperly translocated ribosomes. Back-translocation proceeds from a post-translocation (POST) complex to a pre-translocation (PRE) complex, thus giving elongation factor G a second chance to translocate the tRNAs correctly. Binds to ribosomes in a GTP-dependent manner. The sequence is that of Elongation factor 4 from Bacillus cereus (strain ATCC 14579 / DSM 31 / CCUG 7414 / JCM 2152 / NBRC 15305 / NCIMB 9373 / NCTC 2599 / NRRL B-3711).